A 157-amino-acid chain; its full sequence is Regenerating islet-derived protein 4 (157 aa).

An N-terminal signal peptide occupies residues M1 to S22. C29 and C40 are disulfide-bonded. Residues Y36–K154 enclose the C-type lectin domain. 3 N-linked (GlcNAc...) asparagine glycosylation sites follow: N49, N62, and N101. 2 disulfide bridges follow: C57–C153 and C128–C145. A carbohydrate is bound by residues D97–N101 and K134–K136.

The protein localises to the secreted. Calcium-independent lectin displaying mannose-binding specificity and able to maintain carbohydrate recognition activity in an acidic environment. May be involved in inflammatory and metaplastic responses of the gastrointestinal epithelium. The chain is Regenerating islet-derived protein 4 (Reg4) from Rattus norvegicus (Rat).